A 328-amino-acid polypeptide reads, in one-letter code: MFGLGIIVIAVIIVIALLVLFSFVPVGLWISAIAAGVKVGIGTLVGMRLRRVSPRKVIGPLIKAHKAGLNLTTNQLESHYLAGGNVDRVVDANIAAQRADINLPFERGAAIDLAGRDVLEAVQMSVNPKVIETPFITGVAMNGIEVKAKARITVRANISRLVGGSGEETIIARVGEGIVSTIGSSEHHTQVLENPDNISKTVLSKGLDSGTAFEILSIDIADVDIGKNIGADLQTEQALADKNIAQAKAEERRAMAVASEQEMKARVQEMRAKVVEAESEVPLAMAEALREGNLGVKDYYNLKNVEADTGMRNAINKRTEQNEDESPK.

2 helical membrane passes run 1-21 (MFGL…LVLF) and 26-46 (VGLW…TLVG).

This sequence belongs to the flotillin-like FloA family. In terms of assembly, homooligomerizes.

It is found in the cell membrane. It localises to the membrane raft. Functionally, found in functional membrane microdomains (FMM) that may be equivalent to eukaryotic membrane rafts. FMMs are highly dynamic and increase in number as cells age. Flotillins are thought to be important factors in membrane fluidity. This Staphylococcus haemolyticus (strain JCSC1435) protein is Flotillin-like protein FloA.